Consider the following 291-residue polypeptide: MSNPDDLDDGLAYDFDAEHEVIFDAKDGSPPTKKVQKRSIEQDDDDVDDIDGKKEERNSEDDSNRPISKRQKKLQKKSKLIEKKKEESQYIVSQRKALPASSPEKIIEYLTTLIREKNPDLSVLELEELYFKRNDFLSTEKFDAERRLSNFPAFIQKFSVAPKKIVFSMSNIRVADVYRSLNGGKNCVKLFSKSKLKDDIATVERLLTDSSKKSNKNKDSLYFIATPTRMQKIIEATDLLFQGKEKLDIILDASYLDPKDNTILSFENAAVLCQVLKTFLNKKSSVKILLY.

Residues Ile22–Lys79 are disordered. Residues Ile50–Asn64 are compositionally biased toward basic and acidic residues. The residue at position 59 (Ser59) is a Phosphoserine. Positions Ile67–Ser78 are enriched in basic residues.

This sequence belongs to the CMS1 family.

Its subcellular location is the nucleus. Functionally, may play a role in the regulation of DNA replication and cell cycle control. This Saccharomyces cerevisiae (strain ATCC 204508 / S288c) (Baker's yeast) protein is Protein CMS1 (CMS1).